A 187-amino-acid chain; its full sequence is Elongation factor P (187 aa).

Belongs to the elongation factor P family.

The protein resides in the cytoplasm. The protein operates within protein biosynthesis; polypeptide chain elongation. In terms of biological role, involved in peptide bond synthesis. Stimulates efficient translation and peptide-bond synthesis on native or reconstituted 70S ribosomes in vitro. Probably functions indirectly by altering the affinity of the ribosome for aminoacyl-tRNA, thus increasing their reactivity as acceptors for peptidyl transferase. The polypeptide is Elongation factor P (Kocuria rhizophila (strain ATCC 9341 / DSM 348 / NBRC 103217 / DC2201)).